A 206-amino-acid polypeptide reads, in one-letter code: NADH-quinone oxidoreductase subunit C (206 aa).

The protein belongs to the complex I 30 kDa subunit family. In terms of assembly, NDH-1 is composed of 14 different subunits. Subunits NuoB, C, D, E, F, and G constitute the peripheral sector of the complex.

Its subcellular location is the cell inner membrane. It carries out the reaction a quinone + NADH + 5 H(+)(in) = a quinol + NAD(+) + 4 H(+)(out). Its function is as follows. NDH-1 shuttles electrons from NADH, via FMN and iron-sulfur (Fe-S) centers, to quinones in the respiratory chain. The immediate electron acceptor for the enzyme in this species is believed to be ubiquinone. Couples the redox reaction to proton translocation (for every two electrons transferred, four hydrogen ions are translocated across the cytoplasmic membrane), and thus conserves the redox energy in a proton gradient. This is NADH-quinone oxidoreductase subunit C from Bordetella avium (strain 197N).